Reading from the N-terminus, the 469-residue chain is Putative dipeptidase SSP1012 (469 aa).

Histidine 84 lines the Zn(2+) pocket. The active site involves aspartate 86. Aspartate 115 provides a ligand contact to Zn(2+). Glutamate 149 (proton acceptor) is an active-site residue. The Zn(2+) site is built by glutamate 150, aspartate 173, and histidine 440.

Belongs to the peptidase M20A family. It depends on Zn(2+) as a cofactor.

In Staphylococcus saprophyticus subsp. saprophyticus (strain ATCC 15305 / DSM 20229 / NCIMB 8711 / NCTC 7292 / S-41), this protein is Putative dipeptidase SSP1012.